A 76-amino-acid chain; its full sequence is Large ribosomal subunit protein eL20 (76 aa).

This sequence belongs to the eukaryotic ribosomal protein eL20 family. As to quaternary structure, part of the 50S ribosomal subunit. Binds 23S rRNA.

The polypeptide is Large ribosomal subunit protein eL20 (Methanocaldococcus jannaschii (strain ATCC 43067 / DSM 2661 / JAL-1 / JCM 10045 / NBRC 100440) (Methanococcus jannaschii)).